The chain runs to 225 residues: U2 small nuclear ribonucleoprotein B'' (225 aa).

Residues histidine 7–threonine 86 enclose the RRM 1 domain. Positions alanine 99–proline 145 are disordered. Residue lysine 111 is modified to N6-acetyllysine; alternate. Lysine 111 is covalently cross-linked (Glycyl lysine isopeptide (Lys-Gly) (interchain with G-Cter in SUMO2); alternate). Residues valine 113 to lysine 123 are compositionally biased toward low complexity. Residues glycine 127–asparagine 141 show a composition bias toward polar residues. Position 151 is a phosphotyrosine (tyrosine 151). In terms of domain architecture, RRM 2 spans tyrosine 151 to lysine 225.

Belongs to the RRM U1 A/B'' family. As to quaternary structure, identified in the spliceosome B complex. Identified in the spliceosome C complex. Present in a spliceosome complex assembled in vitro, and composed of SNRPB2, HPRP8BP and CRNKL1. Contributes to the binding of stem loop IV of U2 snRNA with SNRPP1.

The protein localises to the nucleus. Its function is as follows. Involved in pre-mRNA splicing as component of the spliceosome. Associated with sn-RNP U2, where it contributes to the binding of stem loop IV of U2 snRNA. The chain is U2 small nuclear ribonucleoprotein B'' (SNRPB2) from Homo sapiens (Human).